A 507-amino-acid polypeptide reads, in one-letter code: ATP synthase subunit alpha, chloroplastic (507 aa).

170 to 177 serves as a coordination point for ATP; it reads GDRQTGKT.

It belongs to the ATPase alpha/beta chains family. As to quaternary structure, F-type ATPases have 2 components, CF(1) - the catalytic core - and CF(0) - the membrane proton channel. CF(1) has five subunits: alpha(3), beta(3), gamma(1), delta(1), epsilon(1). CF(0) has four main subunits: a, b, b' and c.

It localises to the plastid. The protein resides in the chloroplast thylakoid membrane. The catalysed reaction is ATP + H2O + 4 H(+)(in) = ADP + phosphate + 5 H(+)(out). Functionally, produces ATP from ADP in the presence of a proton gradient across the membrane. The alpha chain is a regulatory subunit. The polypeptide is ATP synthase subunit alpha, chloroplastic (Phalaenopsis aphrodite subsp. formosana (Moth orchid)).